The sequence spans 149 residues: Nucleoside diphosphate kinase (149 aa).

ATP contacts are provided by Lys9, Phe57, Arg85, Thr91, Arg102, and Asn112. His115 acts as the Pros-phosphohistidine intermediate in catalysis.

This sequence belongs to the NDK family. Requires Mg(2+) as cofactor.

The protein localises to the cytoplasm. It carries out the reaction a 2'-deoxyribonucleoside 5'-diphosphate + ATP = a 2'-deoxyribonucleoside 5'-triphosphate + ADP. The catalysed reaction is a ribonucleoside 5'-diphosphate + ATP = a ribonucleoside 5'-triphosphate + ADP. Its function is as follows. Major role in the synthesis of nucleoside triphosphates other than ATP. The ATP gamma phosphate is transferred to the NDP beta phosphate via a ping-pong mechanism, using a phosphorylated active-site intermediate. The chain is Nucleoside diphosphate kinase from Methanocorpusculum labreanum (strain ATCC 43576 / DSM 4855 / Z).